Reading from the N-terminus, the 357-residue chain is Phosphoribosylformylglycinamidine cyclo-ligase (357 aa).

This sequence belongs to the AIR synthase family.

The protein localises to the cytoplasm. The enzyme catalyses 2-formamido-N(1)-(5-O-phospho-beta-D-ribosyl)acetamidine + ATP = 5-amino-1-(5-phospho-beta-D-ribosyl)imidazole + ADP + phosphate + H(+). It functions in the pathway purine metabolism; IMP biosynthesis via de novo pathway; 5-amino-1-(5-phospho-D-ribosyl)imidazole from N(2)-formyl-N(1)-(5-phospho-D-ribosyl)glycinamide: step 2/2. The polypeptide is Phosphoribosylformylglycinamidine cyclo-ligase (Rhizobium leguminosarum).